We begin with the raw amino-acid sequence, 187 residues long: Adenylate kinase (187 aa).

10-15 (GSGKGT) is a binding site for ATP. The interval 30–59 (STGDLLRAEVAAGSPLGVKAKEVMARGDLV) is NMP. AMP contacts are provided by residues threonine 31, arginine 36, 57–59 (DLV), 85–88 (GYPR), and glutamine 92. The tract at residues 126–136 (GRAKAEGREDD) is LID. Residue arginine 127 coordinates ATP. Arginine 133 and arginine 144 together coordinate AMP. Residue glycine 172 participates in ATP binding.

This sequence belongs to the adenylate kinase family. Monomer.

It is found in the cytoplasm. The enzyme catalyses AMP + ATP = 2 ADP. Its pathway is purine metabolism; AMP biosynthesis via salvage pathway; AMP from ADP: step 1/1. Its function is as follows. Catalyzes the reversible transfer of the terminal phosphate group between ATP and AMP. Plays an important role in cellular energy homeostasis and in adenine nucleotide metabolism. This is Adenylate kinase from Xanthomonas campestris pv. campestris (strain B100).